We begin with the raw amino-acid sequence, 389 residues long: 11-beta-hydroxysteroid dehydrogenase-like 5 (389 aa).

Residues 11 to 31 traverse the membrane as a helical; Signal-anchor for type II membrane protein segment; it reads LVAPPATMVVMAFAWPLLSFI. NADP(+) contacts are provided by residues 56-82 and Asp107; that span reads GASS…VARR. Ser186 contributes to the substrate binding site. Catalysis depends on Tyr199, which acts as the Proton acceptor. NADP(+) is bound by residues 199–203 and Lys203; that span reads YSAAK. A disordered region spans residues 337–381; sequence LMLEGGPPRVPASPPRYTASPPHYTASPPRYPASPPRYPASPPRF. Over residues 365-378 the composition is skewed to pro residues; that stretch reads PRYPASPPRYPASP.

This sequence belongs to the short-chain dehydrogenases/reductases (SDR) family.

It is found in the membrane. In Arabidopsis thaliana (Mouse-ear cress), this protein is 11-beta-hydroxysteroid dehydrogenase-like 5 (HSD5).